Reading from the N-terminus, the 445-residue chain is Phosphoglucosamine mutase (445 aa).

Residue serine 101 is the Phosphoserine intermediate of the active site. Mg(2+) is bound by residues serine 101, aspartate 240, aspartate 242, and aspartate 244. At serine 101 the chain carries Phosphoserine.

This sequence belongs to the phosphohexose mutase family. Mg(2+) is required as a cofactor. Activated by phosphorylation.

It carries out the reaction alpha-D-glucosamine 1-phosphate = D-glucosamine 6-phosphate. Functionally, catalyzes the conversion of glucosamine-6-phosphate to glucosamine-1-phosphate. The sequence is that of Phosphoglucosamine mutase from Pseudomonas paraeruginosa (strain DSM 24068 / PA7) (Pseudomonas aeruginosa (strain PA7)).